We begin with the raw amino-acid sequence, 287 residues long: ATP synthase gamma chain (287 aa).

The protein belongs to the ATPase gamma chain family. In terms of assembly, F-type ATPases have 2 components, CF(1) - the catalytic core - and CF(0) - the membrane proton channel. CF(1) has five subunits: alpha(3), beta(3), gamma(1), delta(1), epsilon(1). CF(0) has three main subunits: a, b and c.

Its subcellular location is the cell inner membrane. In terms of biological role, produces ATP from ADP in the presence of a proton gradient across the membrane. The gamma chain is believed to be important in regulating ATPase activity and the flow of protons through the CF(0) complex. This Xanthomonas axonopodis pv. citri (strain 306) protein is ATP synthase gamma chain.